The sequence spans 325 residues: UPF0285 protein MmarC5_0962 (325 aa).

It belongs to the UPF0285 family.

In Methanococcus maripaludis (strain C5 / ATCC BAA-1333), this protein is UPF0285 protein MmarC5_0962.